We begin with the raw amino-acid sequence, 113 residues long: MHELSLCQSAVEIIQRQAEQHDVKRVTAVWLEIGALSCVEESAVRFSFEIVCHGTVAQGCDLHIVYKPAQAWCWDCSQVVEVHQHDAQCPLCHGERLRVDTGDSLIVKSIEVE.

2 residues coordinate Ni(2+): His-2 and Glu-3. Zn(2+) contacts are provided by Cys-73, Cys-76, Cys-89, and Cys-92.

It belongs to the HypA/HybF family. HybF subfamily.

Involved in the maturation of [NiFe] hydrogenases. Required for nickel insertion into the metal center of the hydrogenase. The chain is Hydrogenase maturation factor HybF from Escherichia coli O157:H7.